A 763-amino-acid chain; its full sequence is DEK domain-containing chromatin-associated protein 3 (763 aa).

Disordered stretches follow at residues 1–324 and 458–681; these read MGED…RERK and TGDV…SDKV. Positions 11 to 20 are enriched in polar residues; the sequence is PTANKTTSLE. Composition is skewed to basic and acidic residues over residues 32–44, 72–97, 124–172, and 180–242; these read AGGKETQELAKDE, SEVKKNEDNAETQKMEEKVEVTKDEG, TVMK…KANG, and DIKE…KVED. Residues 60 to 96 are a coiled coil; sequence KDDEKAETEDKESEVKKNEDNAETQKMEEKVEVTKDE. Positions 214–286 form a coiled coil; it reads GKEKEDKEEN…KEESKGSKKR (73 aa). A compositionally biased stretch (acidic residues) spans 243-252; that stretch reads EKEGSEDEND. Residues 253–264 are compositionally biased toward basic and acidic residues; the sequence is NEKVESKDAKED. Residues 265-277 are compositionally biased toward acidic residues; it reads EKEETNDDKEDEK. The short motif at 284–291 is the Nuclear localization signal 1 element; that stretch reads KKRGKGTS. Positions 295–311 are enriched in basic and acidic residues; sequence KVREKNKTEEVKKDAEP. Residues 475 to 484 are compositionally biased toward basic residues; that stretch reads KGAKRKRTPK. Positions 483–490 match the Nuclear localization signal 2 motif; it reads PKKTSPTA. A compositionally biased stretch (low complexity) spans 485 to 496; sequence KTSPTAGSSSSK. The stretch at 513 to 551 forms a coiled coil; that stretch reads KKSLAHSDDESEEEKEEEEKQEEEKAEEKEEKKEEENEN. The span at 521–533 shows a compositional bias: acidic residues; sequence DESEEEKEEEEKQ. Basic and acidic residues predominate over residues 534-547; it reads EEEKAEEKEEKKEE. Acidic residues predominate over residues 557-578; sequence SEDEAPQPSESEEKDESEEHSE. Composition is skewed to low complexity over residues 606–615 and 650–660; these read AVVAAKSSPP and PIKASPAPSKS. Positions 661 to 681 are enriched in basic and acidic residues; that stretch reads ASKEKPVKRAGKGKDKPSDKV. Residues 676 to 731 enclose the DEK-C domain; the sequence is KPSDKVLKNAIVEILKRVDFSTATFTDILKELAKEFTEDLTPRKSSIKMIIQEELT. 2 DNA-binding regions span residues 694–708 and 723–727; these read DFSTATFTDILKELA and KMIIQ. A coiled-coil region spans residues 723-753; the sequence is KMIIQEELTKLADEEEEEEKKEEDSEKEEAG. The disordered stretch occupies residues 730-763; it reads LTKLADEEEEEEKKEEDSEKEEAGGSGGGEEVKA. Over residues 753-763 the composition is skewed to gly residues; sequence GGSGGGEEVKA.

As to quaternary structure, found in a mRNA splicing-dependent exon junction complex (EJC). Binds specifically histones H3 and H4. Interacts with TOP1A, SCC3, At1g61730, At1g20940, At1g13930, DEK4, HDT1, NIT1, SHL, CYP19-1, GEBPL, HSP70-3, PDP2, PDP3, KIN2, RPL11A and PDS5A. As to expression, highly expressed in young seedlings.

The protein localises to the nucleus. It is found in the nucleolus. Functionally, chromatin-associated protein which contributes to the modulation of chromatin structure (such as super-helical structure of DNA) and function. Binds to chromatin of protein-coding genes throughout the genome to regulate nucleosome occupancy and chromatin accessibility, and to modulate the expression of target genes. Negative regulator of stress tolerance (e.g. high salt). This chain is DEK domain-containing chromatin-associated protein 3, found in Arabidopsis thaliana (Mouse-ear cress).